A 671-amino-acid chain; its full sequence is DNA ligase (671 aa).

NAD(+)-binding positions include 32-36 (DAEYD), 81-82 (SL), and Glu113. The active-site N6-AMP-lysine intermediate is Lys115. Residues Arg136, Glu173, Lys290, and Lys314 each contribute to the NAD(+) site. Cys408, Cys411, Cys426, and Cys432 together coordinate Zn(2+). Positions 593-671 (EIDSPFAGKT…ETEMLRLLGS (79 aa)) constitute a BRCT domain.

The protein belongs to the NAD-dependent DNA ligase family. LigA subfamily. The cofactor is Mg(2+). It depends on Mn(2+) as a cofactor.

The catalysed reaction is NAD(+) + (deoxyribonucleotide)n-3'-hydroxyl + 5'-phospho-(deoxyribonucleotide)m = (deoxyribonucleotide)n+m + AMP + beta-nicotinamide D-nucleotide.. Functionally, DNA ligase that catalyzes the formation of phosphodiester linkages between 5'-phosphoryl and 3'-hydroxyl groups in double-stranded DNA using NAD as a coenzyme and as the energy source for the reaction. It is essential for DNA replication and repair of damaged DNA. This is DNA ligase from Escherichia fergusonii (strain ATCC 35469 / DSM 13698 / CCUG 18766 / IAM 14443 / JCM 21226 / LMG 7866 / NBRC 102419 / NCTC 12128 / CDC 0568-73).